We begin with the raw amino-acid sequence, 482 residues long: MNRYPLKALESELEKKHMLICIDSRKVEKGCVFVALPGSSVDGGLFIPDAVSRGAAYIVCRHNEVEYCGSAIPIVVDDPRYTLGRLARIFYNTGNLSMPIIGVTGTNGKTTITYLLEYLFRAKGNRTGVIGTIAYRWPGFSKEAPLTTPQCLDLHAMLAQMQVDKTEIVFMEVSSHALDQRRIAGISFKGVIFTNLTQDHLDYHKDMKEYFHAKARLFFEYPSKNKIMVASMDNQWGRKLAKLVPEIIGFGFKNKPTQVSNYLFGKILSSSRAGLHLQMSFKDKVWELCTPLVGVHNAENLLAVQAISLQLGLAPEDFCCFEKFTGVPGRLERIVNKKQLDIFVDYAHTPDALINVLSALRDVGFKRIITVFGCGGNRDKAKRPLMGKAVAKLSDVAVLTSDNPRNEDPELIMADVLPGLKKAKQIITEPDREKAIRQAIELVSPGDALLVAGKGHECTQQIGFMKYPFSDQSVIRKILGCD.

S24 contacts UDP-N-acetyl-alpha-D-muramoyl-L-alanyl-D-glutamate. ATP is bound at residue 105–111 (GTNGKTT). UDP-N-acetyl-alpha-D-muramoyl-L-alanyl-D-glutamate is bound by residues 147-148 (TT), S174, Q180, and R182. K214 bears the N6-carboxylysine mark. Residues R378, 402–405 (DNPR), G453, and E457 each bind meso-2,6-diaminopimelate. The Meso-diaminopimelate recognition motif signature appears at 402 to 405 (DNPR).

Belongs to the MurCDEF family. MurE subfamily. The cofactor is Mg(2+). Carboxylation is probably crucial for Mg(2+) binding and, consequently, for the gamma-phosphate positioning of ATP.

The protein localises to the cytoplasm. It carries out the reaction UDP-N-acetyl-alpha-D-muramoyl-L-alanyl-D-glutamate + meso-2,6-diaminopimelate + ATP = UDP-N-acetyl-alpha-D-muramoyl-L-alanyl-gamma-D-glutamyl-meso-2,6-diaminopimelate + ADP + phosphate + H(+). Its pathway is cell wall biogenesis; peptidoglycan biosynthesis. Functionally, catalyzes the addition of meso-diaminopimelic acid to the nucleotide precursor UDP-N-acetylmuramoyl-L-alanyl-D-glutamate (UMAG) in the biosynthesis of bacterial cell-wall peptidoglycan. This chain is UDP-N-acetylmuramoyl-L-alanyl-D-glutamate--2,6-diaminopimelate ligase, found in Lawsonia intracellularis (strain PHE/MN1-00).